The primary structure comprises 196 residues: Small ribosomal subunit protein uS4c (196 aa).

Residues 1-14 (MSRYRGPRLKKIRR) show a composition bias toward basic residues. Residues 1-43 (MSRYRGPRLKKIRRLGALPGLTRKTPKSGSNPKKKFHSGKKEQ) form a disordered region. The S4 RNA-binding domain occupies 89-169 (MRLDNILFRL…LPKHLTIDTL (81 aa)).

This sequence belongs to the universal ribosomal protein uS4 family. In terms of assembly, part of the 30S ribosomal subunit. Contacts protein S5. The interaction surface between S4 and S5 is involved in control of translational fidelity.

The protein resides in the plastid. It is found in the chloroplast. In terms of biological role, one of the primary rRNA binding proteins, it binds directly to 16S rRNA where it nucleates assembly of the body of the 30S subunit. Functionally, with S5 and S12 plays an important role in translational accuracy. This is Small ribosomal subunit protein uS4c (rps4) from Melica uniflora (Wood melick grass).